The chain runs to 356 residues: Probable scoulerine-9-O-methyltransferase OMT2B (356 aa).

Met173 contributes to the S-adenosyl-L-methionine binding site. Asp176 contacts substrate. Residues Thr177, Gly202, Asp225, 245–246, and Lys259 each bind S-adenosyl-L-methionine; that span reads DI. Position 260 to 264 (260 to 264) interacts with substrate; it reads YVLHN. The active-site Proton acceptor is the His263.

Belongs to the class I-like SAM-binding methyltransferase superfamily. Cation-independent O-methyltransferase family. COMT subfamily.

The enzyme catalyses (S)-scoulerine + S-adenosyl-L-methionine = (S)-tetrahydrocolumbamine + S-adenosyl-L-homocysteine + H(+). Its pathway is alkaloid biosynthesis. Functionally, methyltransferase involved in the biosynthesis of the benzylisoquinoline alkaloid noscapine. Catalyzes the conversion of (S)-scoulerine to (S)-tetrahydrocolumbamine. The heterodimers OMT2B-SOMT3 and OMT2B-6OMT do not possess 3-O-acetyl-4'-O-demethylpapaveroxine 4'-O-methyltransferase activity. The polypeptide is Probable scoulerine-9-O-methyltransferase OMT2B (Papaver somniferum (Opium poppy)).